The chain runs to 170 residues: Ribosome maturation factor RimM (170 aa).

In terms of domain architecture, PRC barrel spans 98 to 170; the sequence is PDEYYWVDLE…LIVVDWDPDF (73 aa).

It belongs to the RimM family. In terms of assembly, binds ribosomal protein uS19.

It is found in the cytoplasm. Its function is as follows. An accessory protein needed during the final step in the assembly of 30S ribosomal subunit, possibly for assembly of the head region. Essential for efficient processing of 16S rRNA. May be needed both before and after RbfA during the maturation of 16S rRNA. It has affinity for free ribosomal 30S subunits but not for 70S ribosomes. In Xanthomonas oryzae pv. oryzae (strain MAFF 311018), this protein is Ribosome maturation factor RimM.